The sequence spans 178 residues: Small ribosomal subunit protein uS5 (178 aa).

An S5 DRBM domain is found at 15–78 (FEEKIIEIRR…SAAKRNIIEV (64 aa)).

It belongs to the universal ribosomal protein uS5 family. Part of the 30S ribosomal subunit. Contacts proteins S4 and S8.

With S4 and S12 plays an important role in translational accuracy. Its function is as follows. Located at the back of the 30S subunit body where it stabilizes the conformation of the head with respect to the body. In Thermotoga sp. (strain RQ2), this protein is Small ribosomal subunit protein uS5.